The primary structure comprises 259 residues: Bidirectional sugar transporter SWEET6a (259 aa).

Residues 1-9 (MISPDAARN) lie on the Extracellular side of the membrane. A helical membrane pass occupies residues 10–30 (VVGIIGNVISFGLFLAPVPTF). Positions 10–98 (VVGIIGNVIS…IFFLYSPNKK (89 aa)) constitute a MtN3/slv 1 domain. Residues 31–45 (WRICKRKDVEEFKAD) are Cytoplasmic-facing. Residues 46–66 (PYLATLLNCMLWVFYGIPVVH) form a helical membrane-spanning segment. The Extracellular segment spans residues 67–69 (PNS). A helical membrane pass occupies residues 70-90 (ILVVTINGIGLLVEGTYLLIF). Topologically, residues 91–103 (FLYSPNKKRLRMC) are cytoplasmic. Residues 104 to 124 (AVLGVELVFMLAVILGVLLGA) traverse the membrane as a helical segment. Over 125-131 (HTHEKRS) the chain is Extracellular. The chain crosses the membrane as a helical span at residues 132–152 (MIVGILCVFFGSIMYFSPLTI). In terms of domain architecture, MtN3/slv 2 spans 133 to 216 (IVGILCVFFG…LILYACYYRT (84 aa)). Residues 153–165 (MGKVIKTKSVEYM) are Cytoplasmic-facing. A helical membrane pass occupies residues 166–186 (PFFLSLVCFLNGVCWTAYALI). The Extracellular segment spans residues 187 to 189 (RFD). Residues 190–210 (IYVTIPNGLGALFGAIQLILY) traverse the membrane as a helical segment. Residues 211 to 259 (ACYYRTTPKKTKAAKDVEMPSVVVSGTGAAAAAGGGNTGGGSISVTVER) are Cytoplasmic-facing.

This sequence belongs to the SWEET sugar transporter family. Forms homooligomers and/or heterooligomers.

Its subcellular location is the cell membrane. Mediates both low-affinity uptake and efflux of sugar across the plasma membrane. In Oryza sativa subsp. indica (Rice), this protein is Bidirectional sugar transporter SWEET6a (SWEET6A).